The primary structure comprises 360 residues: NAD(P)H-quinone oxidoreductase subunit 1, chloroplastic (360 aa).

8 helical membrane-spanning segments follow: residues 29–49, 96–116, 128–148, 166–186, 204–224, 255–277, 297–317, and 333–353; these read WIPL…LVIV, IWLF…AYLV, ISLG…GLLM, AAQA…ICLL, ILGW…IAAL, GLFY…ILYL, IFAA…FIFL, and LLDL…LLTA.

This sequence belongs to the complex I subunit 1 family. In terms of assembly, NDH is composed of at least 16 different subunits, 5 of which are encoded in the nucleus.

The protein localises to the plastid. It localises to the chloroplast thylakoid membrane. It carries out the reaction a plastoquinone + NADH + (n+1) H(+)(in) = a plastoquinol + NAD(+) + n H(+)(out). The enzyme catalyses a plastoquinone + NADPH + (n+1) H(+)(in) = a plastoquinol + NADP(+) + n H(+)(out). Its function is as follows. NDH shuttles electrons from NAD(P)H:plastoquinone, via FMN and iron-sulfur (Fe-S) centers, to quinones in the photosynthetic chain and possibly in a chloroplast respiratory chain. The immediate electron acceptor for the enzyme in this species is believed to be plastoquinone. Couples the redox reaction to proton translocation, and thus conserves the redox energy in a proton gradient. This is NAD(P)H-quinone oxidoreductase subunit 1, chloroplastic from Chlorokybus atmophyticus (Soil alga).